Here is a 431-residue protein sequence, read N- to C-terminus: Glutamate-1-semialdehyde 2,1-aminomutase (431 aa).

Lys269 is subject to N6-(pyridoxal phosphate)lysine.

This sequence belongs to the class-III pyridoxal-phosphate-dependent aminotransferase family. HemL subfamily. In terms of assembly, homodimer. It depends on pyridoxal 5'-phosphate as a cofactor.

It is found in the cytoplasm. The enzyme catalyses (S)-4-amino-5-oxopentanoate = 5-aminolevulinate. It participates in porphyrin-containing compound metabolism; protoporphyrin-IX biosynthesis; 5-aminolevulinate from L-glutamyl-tRNA(Glu): step 2/2. In Francisella tularensis subsp. tularensis (strain WY96-3418), this protein is Glutamate-1-semialdehyde 2,1-aminomutase.